The sequence spans 756 residues: MTSIIGAALPYKSPEKAIASSSYSAENDSSPVDAVIFAGTSLVLGTACRYLFNGTRVPYTVVLLVIGIFLGSLEYGTKHNLGKLGHGIRIWNGINPDLLLAVFLPVLLFESSFSMDVHQIKRCMGQMVLLAGPGVLISTFCLGALIKLTFPYNWDWKTSLLLGGLLGATDPVAVVALLKELGASKKMTTLIDGESLMNDGVSVVVFQLFFKMVMGHNSDWGSIIKFLVQNSFGAVGIGLAFGIASVFWLKFIFNDTVAQITVTLSASYFAYYTAQEWAGVSGILTVMILGMFFAAFARTAFKGDSHQSLHHFWEMAAYIANTLVFMLSGVIIAESVLSGQTISYKGNSWSFLFLLYLYVQLSRCVVVGVLYPLLCRSGYGLDWKESIILTWSGLRGAVSLSLALSVKQSSGNSYLSSDTGTRFLFLTGGIVFLTLVVNGSTTQLLLHLLRMDTLTATKKRILEYTKFEMMKTALKAFENLGDDEELGSADWPTVIRHISSLKDLEGRQVNPHDGYEAGSLDPTNIMDIRIRFLNGVQAAYWEMLDDGRITQCTANVLMQSVDEALDLVSTSSLSDWRGLEPRVHFPNYYKFLQSKIIPHKLVTHLIVERLESACYISSAFLRAHRIARQQLHIFLGNSNIASTVINESEVEGEEAKQFLEDVRDSFPQVLSVLKTRQVTHYVLNHLNGYIKNLEKVGLLEGKEVSHLHDVVQSDLKKLLRHPPSLKLPNVDDLITSNPLLKDRSSFRSLAIGETDA.

Residues 1 to 31 (MTSIIGAALPYKSPEKAIASSSYSAENDSSP) lie on the Extracellular side of the membrane. An N-linked (GlcNAc...) asparagine glycan is attached at Asn-27. The helical transmembrane segment at 32 to 52 (VDAVIFAGTSLVLGTACRYLF) threads the bilayer. Residues 53 to 56 (NGTR) lie on the Cytoplasmic side of the membrane. A helical transmembrane segment spans residues 57 to 77 (VPYTVVLLVIGIFLGSLEYGT). The Extracellular segment spans residues 78–89 (KHNLGKLGHGIR). The helical transmembrane segment at 90-110 (IWNGINPDLLLAVFLPVLLFE) threads the bilayer. At 111–125 (SSFSMDVHQIKRCMG) the chain is on the cytoplasmic side. The helical transmembrane segment at 126–146 (QMVLLAGPGVLISTFCLGALI) threads the bilayer. Residues 147–157 (KLTFPYNWDWK) are Extracellular-facing. A helical membrane pass occupies residues 158 to 178 (TSLLLGGLLGATDPVAVVALL). Topologically, residues 179-194 (KELGASKKMTTLIDGE) are cytoplasmic. A helical transmembrane segment spans residues 195-215 (SLMNDGVSVVVFQLFFKMVMG). The Extracellular segment spans residues 216 to 225 (HNSDWGSIIK). The helical transmembrane segment at 226–248 (FLVQNSFGAVGIGLAFGIASVFW) threads the bilayer. Residues 249-251 (LKF) are Cytoplasmic-facing. The helical transmembrane segment at 252 to 271 (IFNDTVAQITVTLSASYFAY) threads the bilayer. Residues 272 to 276 (YTAQE) lie on the Extracellular side of the membrane. Residues 277–297 (WAGVSGILTVMILGMFFAAFA) form a helical membrane-spanning segment. Residues 298–311 (RTAFKGDSHQSLHH) are Cytoplasmic-facing. The chain crosses the membrane as a helical span at residues 312–332 (FWEMAAYIANTLVFMLSGVII). Residues 333 to 350 (AESVLSGQTISYKGNSWS) are Extracellular-facing. A helical transmembrane segment spans residues 351–371 (FLFLLYLYVQLSRCVVVGVLY). Topologically, residues 372–385 (PLLCRSGYGLDWKE) are cytoplasmic. The helical transmembrane segment at 386–406 (SIILTWSGLRGAVSLSLALSV) threads the bilayer. The Extracellular portion of the chain corresponds to 407-422 (KQSSGNSYLSSDTGTR). The chain crosses the membrane as a helical span at residues 423–443 (FLFLTGGIVFLTLVVNGSTTQ). Topologically, residues 444 to 756 (LLLHLLRMDT…RSLAIGETDA (313 aa)) are cytoplasmic.

It belongs to the monovalent cation:proton antiporter 1 (CPA1) transporter (TC 2.A.36) family.

It localises to the cell membrane. It carries out the reaction Na(+)(in) + H(+)(out) = Na(+)(out) + H(+)(in). It catalyses the reaction K(+)(in) + H(+)(out) = K(+)(out) + H(+)(in). Functionally, may act in low affinity electroneutral exchange of protons for cations such as Na(+) or K(+) across membranes. May also exchange Li(+) and Cs(+) with a lower affinity. This Arabidopsis thaliana (Mouse-ear cress) protein is Sodium/hydrogen exchanger 8 (NHX8).